The primary structure comprises 351 residues: Histidine protein kinase SaeS (351 aa).

The next 2 helical transmembrane spans lie at 9–29 and 40–60; these read IIIGVVSSILLTSTILAIAYI and TLTLTTIITSCLTLLICSIFI. Positions 61-114 constitute an HAMP domain; the sequence is NPLIQKIKQFNIKTKQFANGNYASNDKTFNSPKEIYELNQSFNKMASEITQQMN. Positions 129–348 constitute a Histidine kinase domain; it reads NLAHDLKTPL…TMTVTLHKLD (220 aa). Phosphohistidine; by autocatalysis is present on histidine 132.

Autophosphorylated.

The protein resides in the cell membrane. The catalysed reaction is ATP + protein L-histidine = ADP + protein N-phospho-L-histidine.. Functionally, member of the two-component regulatory system SaeR/SaeS involved in the regulation of staphylococcal virulence factors in a strain-dependent fashion. Probably functions as a membrane-associated protein kinase that upon sensing the appropriate signal, autophosphorylates and in turn activates the cytosolic response regulator SaeR. This is Histidine protein kinase SaeS (saeS) from Staphylococcus aureus (strain bovine RF122 / ET3-1).